The chain runs to 471 residues: Replication factor C large subunit (471 aa).

ATP is bound at residue 44–51 (GSPGIGKT). Residues 422–431 (RTDAAVDHSE) are compositionally biased toward basic and acidic residues. Residues 422-471 (RTDAAVDHSEGAFAGAVREDNTDEDSAADETTDGDEDTGADSQRGLDEFF) are disordered. A compositionally biased stretch (acidic residues) spans 442–460 (NTDEDSAADETTDGDEDTG).

Belongs to the activator 1 small subunits family. RfcL subfamily. As to quaternary structure, heteromultimer composed of small subunits (RfcS) and large subunits (RfcL).

Its function is as follows. Part of the RFC clamp loader complex which loads the PCNA sliding clamp onto DNA. The polypeptide is Replication factor C large subunit (Halobacterium salinarum (strain ATCC 29341 / DSM 671 / R1)).